A 309-amino-acid polypeptide reads, in one-letter code: GATA transcription factor 25 (309 aa).

The interval 1–35 is disordered; sequence MFGRHSIIPNNQIGTASASAGEDHVSASATSGHIP. Residues 8–18 are compositionally biased toward polar residues; the sequence is IPNNQIGTASA. The 36-residue stretch at 77–112 folds into the Tify domain; it reads PPEGANQLTISFRGQVYVFDAVGADKVDAVLSLLGG. The CCT domain maps to 146–188; it reads RAQSLDRFRKKRNARCFEKKVRYGVRQEVALRMARNKGQFTSS. Over residues 187–202 the composition is skewed to polar residues; the sequence is SSKMTDGAYNSGTDQD. The segment at 187-207 is disordered; the sequence is SSKMTDGAYNSGTDQDSAQDD. Residues 208–267 form a GATA-type zinc finger; sequence AHPEISCTHCGISSKCTPMMRRGPSGPRTLCNACGLFWANRGTLRDLSKKTEENQLALMK. Residues 290–309 form a disordered region; that stretch reads EHTSMVSLANGDNSNLLGDH. A compositionally biased stretch (polar residues) spans 293 to 309; sequence SMVSLANGDNSNLLGDH.

It belongs to the type IV zinc-finger family. Class C subfamily. In terms of tissue distribution, predominantly expressed in shoot apices, inflorescences and roots.

Its subcellular location is the nucleus. In terms of biological role, transcriptional activator that specifically binds 5'-GATA-3' or 5'-GAT-3' motifs within gene promoters. In Arabidopsis thaliana (Mouse-ear cress), this protein is GATA transcription factor 25 (GATA25).